An 824-amino-acid polypeptide reads, in one-letter code: Lysine-specific histone demethylase 1B homolog (824 aa).

Residues 1-31 (MTTELEIDDRKEEEAQIPGETSESEEGDEPV) form a disordered region. One can recognise an SWIRM domain in the interval 245–346 (PFTDVIANIV…YGAFDFRIDP (102 aa)). FAD contacts are provided by residues 352-407 (PKIA…AQII), Val-579, Glu-788, and 796-798 (QTM).

Belongs to the flavin monoamine oxidase family. FAD is required as a cofactor. As to expression, in hermaphrodites, expressed in gut cells, embryonic cells and sheath cells. Not expressed in sperm or pharyngeal neurons.

It localises to the nucleus. The enzyme catalyses N(6),N(6)-dimethyl-L-lysyl(4)-[histone H3] + 2 A + 2 H2O = L-lysyl(4)-[histone H3] + 2 formaldehyde + 2 AH2. Its function is as follows. Histone demethylase that demethylates di-methylated 'Lys-4' of histone H3, a specific tag for epigenetic transcriptional activation, thereby acting as a corepressor. Acts by oxidizing the substrate by FAD to generate the corresponding imine that is subsequently hydrolyzed. Plays a role in the mitotic development of the germline. May be involved in H3 demethylation in mitotic cells including gut and embryonic cells. Plays a role in sensitivity upon interstrand cross-link DNA damage, probably by positively regulating the expression of mlh-1. Plays a role in developmental growth and lifespan regulation in response to ultraviolet-induced damage. No obvious role in larval development, sex chromosome segregation or for regulating meiotic crossover frequency. The protein is Lysine-specific histone demethylase 1B homolog of Caenorhabditis elegans.